The primary structure comprises 444 residues: Glutamate-1-semialdehyde 2,1-aminomutase (444 aa).

Lys267 carries the post-translational modification N6-(pyridoxal phosphate)lysine.

The protein belongs to the class-III pyridoxal-phosphate-dependent aminotransferase family. HemL subfamily. As to quaternary structure, homodimer. The cofactor is pyridoxal 5'-phosphate.

It localises to the cytoplasm. The catalysed reaction is (S)-4-amino-5-oxopentanoate = 5-aminolevulinate. It participates in porphyrin-containing compound metabolism; protoporphyrin-IX biosynthesis; 5-aminolevulinate from L-glutamyl-tRNA(Glu): step 2/2. The protein is Glutamate-1-semialdehyde 2,1-aminomutase of Xylella fastidiosa (strain 9a5c).